Here is a 96-residue protein sequence, read N- to C-terminus: ASNSD1 upstream open reading frame protein (96 aa).

Residues 1–10 are compositionally biased toward basic and acidic residues; sequence MPSRGTRPED. A disordered region spans residues 1–28; sequence MPSRGTRPEDSSVLIPTDNSTPHKEDLS. Residues 23-96 are a coiled coil; the sequence is HKEDLSSKIK…ENLDKTKIKK (74 aa).

As to quaternary structure, component of the PAQosome complex which is responsible for the biogenesis of several protein complexes and which consists of R2TP complex members RUVBL1, RUVBL2, RPAP3 and PIH1D1, URI complex members PFDN2, PFDN6, PDRG1, UXT and URI1 as well as ASDURF, POLR2E and DNAAF10/WDR92.

It is found in the cytoplasm. This Homo sapiens (Human) protein is ASNSD1 upstream open reading frame protein.